Reading from the N-terminus, the 476-residue chain is Protein THYLAKOID RHODANESE-LIKE, chloroplastic (476 aa).

The N-terminal 21 residues, 1–21 (MAATTTILSSAAPTPLTAPPR), are a transit peptide targeting the chloroplast. Residues 1 to 29 (MAATTTILSSAAPTPLTAPPRARARAPAA) are disordered. Over residues 11–21 (AAPTPLTAPPR) the composition is skewed to low complexity. Residues 22-58 (ARARAPAARRRRLRARDILGAALGLANGGASAALAAP) constitute a thylakoid transit peptide. Residues 100 to 120 (LVAAAGVAAVALPLVLAQVLG) traverse the membrane as a helical segment. The 107-residue stretch at 140–246 (EEPGAQLVDI…WLSSSLPWTA (107 aa)) folds into the Rhodanese domain. 2 helical membrane-spanning segments follow: residues 264-284 (LPVT…YTEI) and 287-307 (VLQF…LIYA). Positions 342 to 476 (LPSTGTKSQP…PPSSPSPSAP (135 aa)) are disordered. Residues 351–389 (PAITEAAPATAEAAPAAATATAAPPAAPVEETSTEAAPA) show a composition bias toward low complexity. The span at 403 to 412 (LKPPSSPSPL) shows a compositional bias: pro residues. Over residues 425-446 (ESAATESAPAVNSAPVAEAAPE) the composition is skewed to low complexity. Residues 447–476 (AAPPAAPRPLSPYPNYPDLKPPSSPSPSAP) are compositionally biased toward pro residues.

In terms of assembly, component of high molecular weight thylakoid LFNRs-containing protein complexes containing LIR1, LFNR1, LFNR2, TIC62 and TROL proteins.

The protein localises to the plastid. The protein resides in the chloroplast thylakoid membrane. Functionally, rhodanese domain-containing protein required for anchoring ferredoxin--NADP reductase to the thylakoid membranes and sustaining efficient linear electron flow (LEF). The protein is Protein THYLAKOID RHODANESE-LIKE, chloroplastic of Oryza sativa subsp. indica (Rice).